Here is a 515-residue protein sequence, read N- to C-terminus: Bifunctional purine biosynthesis protein PurH (515 aa).

The MGS-like domain occupies 1–145 (MTKRALISVS…KNHASVTVVV (145 aa)).

It belongs to the PurH family.

The enzyme catalyses (6R)-10-formyltetrahydrofolate + 5-amino-1-(5-phospho-beta-D-ribosyl)imidazole-4-carboxamide = 5-formamido-1-(5-phospho-D-ribosyl)imidazole-4-carboxamide + (6S)-5,6,7,8-tetrahydrofolate. It catalyses the reaction IMP + H2O = 5-formamido-1-(5-phospho-D-ribosyl)imidazole-4-carboxamide. It participates in purine metabolism; IMP biosynthesis via de novo pathway; 5-formamido-1-(5-phospho-D-ribosyl)imidazole-4-carboxamide from 5-amino-1-(5-phospho-D-ribosyl)imidazole-4-carboxamide (10-formyl THF route): step 1/1. Its pathway is purine metabolism; IMP biosynthesis via de novo pathway; IMP from 5-formamido-1-(5-phospho-D-ribosyl)imidazole-4-carboxamide: step 1/1. The polypeptide is Bifunctional purine biosynthesis protein PurH (Streptococcus equi subsp. equi (strain 4047)).